The sequence spans 174 residues: Frataxin homolog, mitochondrial (174 aa).

The transit peptide at 1 to 21 (MIKRSLASLVRVSSVMGRRYM) directs the protein to the mitochondrion.

Belongs to the frataxin family. In terms of assembly, monomer. Forms a 24-mer complex made up of 8 copies of a trimeric subcomplex. Increments in mitochondrial iron uptake induce stepwise assembly of species ranging from trimers to 24-mers. Interacts with ISU1 with a 1 to 1 stoichiometry; the interaction is direct. Interacts with YHB1, SDH1, SDH2, AIM45 and CIR1. In terms of processing, processed in two steps by mitochondrial processing peptidase (MPP). MPP first cleaves the precursor to intermediate form and subsequently converts the intermediate to mature size protein.

It localises to the mitochondrion matrix. The catalysed reaction is 4 Fe(2+) + O2 + 4 H(+) = 4 Fe(3+) + 2 H2O. In terms of biological role, promotes the biosynthesis of heme as well as the assembly and repair of iron-sulfur clusters by delivering Fe(2+) to proteins involved in these pathways. Plays a role in the protection against iron-catalyzed oxidative stress through its ability to catalyze the oxidation of Fe(2+) to Fe(3+). Can store large amounts of the metal in the form of a ferrihydrite mineral by oligomerization. May be involved in regulation of the mitochondrial electron transport chain. The sequence is that of Frataxin homolog, mitochondrial from Saccharomyces cerevisiae (strain ATCC 204508 / S288c) (Baker's yeast).